The chain runs to 102 residues: Colipase-like protein 2 (102 aa).

The N-terminal stretch at 1–23 (MAFTQALVTVLALLAGTLPHRHS) is a signal peptide. Cystine bridges form between Cys-36–Cys-47, Cys-42–Cys-58, Cys-46–Cys-80, Cys-68–Cys-88, and Cys-82–Cys-99.

The protein belongs to the colipase family.

Its subcellular location is the secreted. This chain is Colipase-like protein 2 (Clpsl2), found in Mus musculus (Mouse).